Here is a 509-residue protein sequence, read N- to C-terminus: Maturase K (509 aa).

The protein belongs to the intron maturase 2 family. MatK subfamily.

The protein localises to the plastid. It localises to the chloroplast. Usually encoded in the trnK tRNA gene intron. Probably assists in splicing its own and other chloroplast group II introns. The chain is Maturase K from Nicotiana sylvestris (Wood tobacco).